The chain runs to 67 residues: Large ribosomal subunit protein bL35 (67 aa).

A disordered region spans residues 22–52 (VLAGPGKKRHNLSARSQKAKRQNRGSQVLTH). Residues 27 to 44 (GKKRHNLSARSQKAKRQN) show a composition bias toward basic residues.

It belongs to the bacterial ribosomal protein bL35 family.

The protein is Large ribosomal subunit protein bL35 of Granulibacter bethesdensis (strain ATCC BAA-1260 / CGDNIH1).